A 290-amino-acid chain; its full sequence is Probable ECF RNA polymerase sigma factor SigI (290 aa).

The segment at 11 to 74 (WRAHRAYLVD…LCLDHIKSAS (64 aa)) is sigma-70 factor domain-2. The short motif at 34-37 (DMVQ) is the Polymerase core binding element. Positions 110-162 (LALLIMLERLGPAERVVFVLHEIFGLPYQQIATTIGSQASTCRQLAHRARRKI) are sigma-70 factor domain-4_2. A DNA-binding region (H-T-H motif) is located at residues 137 to 156 (YQQIATTIGSQASTCRQLAH).

It belongs to the sigma-70 factor family. ECF subfamily. In terms of assembly, interacts transiently with the RNA polymerase catalytic core formed by RpoA, RpoB, RpoC and RpoZ (2 alpha, 1 beta, 1 beta' and 1 omega subunit) to form the RNA polymerase holoenzyme that can initiate transcription.

In terms of biological role, sigma factors are initiation factors that promote the attachment of RNA polymerase to specific initiation sites and are then released. Extracytoplasmic function (ECF) sigma factors are held in an inactive form by a cognate anti-sigma factor until released, although no anti-sigma factor is known for this protein. The protein is Probable ECF RNA polymerase sigma factor SigI (sigI) of Mycobacterium tuberculosis (strain CDC 1551 / Oshkosh).